Reading from the N-terminus, the 219-residue chain is MSVKIHYQNTHFITSAPDIRHLPEDEGVEIAFAGRSNAGKSSALNRLTNQKSLAKTSKTPGRTQLINLFKVEEGCHIVDLPGYGFAQVPVEMKNKWQKSLGEYLQKRECLKGLVVLMDIRHPMKDLDQQMIFWAIDSRIPVQVLLTKADKLKSGARKQTLLKIRKQVETFGGDVSVDVFSSLKGLGVDQLRAKLDTWFAPALAHLIEEDDLEMPESNEE.

Positions 26–200 constitute an EngB-type G domain; that stretch reads EGVEIAFAGR…RAKLDTWFAP (175 aa). GTP is bound by residues 34–41, 61–65, 79–82, 146–149, and 179–181; these read GRSNAGKS, GRTQL, DLPG, TKAD, and FSS. Positions 41 and 63 each coordinate Mg(2+).

It belongs to the TRAFAC class TrmE-Era-EngA-EngB-Septin-like GTPase superfamily. EngB GTPase family. Mg(2+) is required as a cofactor.

In terms of biological role, necessary for normal cell division and for the maintenance of normal septation. The chain is Probable GTP-binding protein EngB from Vibrio parahaemolyticus serotype O3:K6 (strain RIMD 2210633).